The following is a 71-amino-acid chain: MKTQFAILLVALVLFQMFAQSEAIFGAIWNGIKSLFGRRALNNDLDLDGLDELFDGEISQADVDFLKELMR.

The N-terminal stretch at 1 to 23 (MKTQFAILLVALVLFQMFAQSEA) is a signal peptide. F36 is modified (phenylalanine amide). The propeptide occupies 40 to 71 (ALNNDLDLDGLDELFDGEISQADVDFLKELMR).

It belongs to the non-disulfide-bridged peptide (NDBP) superfamily. Short antimicrobial peptide (group 4) family. Post-translationally, isCT2F is an enzymatic proteolytic cleavage product of IsCT2 by the proteases present in the venom. As to expression, expressed by the venom gland.

The protein localises to the secreted. Its subcellular location is the target cell membrane. IsCT2 shows weak hemolytic activity and antibacterial activity against both Gram-positive and Gram-negative bacteria probably by forming pores in the cell membrane. IsCT2 adopts an amphipathic alpha-helical structure. Its function is as follows. IsCT2f shows neither hemolytic, nor antibacterial activities, surely due to the fact that it cannot apply amphipathic alpha-helical structure. The protein is Cytotoxic linear peptide IsCT2 of Opisthacanthus madagascariensis (Scorpion).